A 426-amino-acid chain; its full sequence is Flotillin-1 (426 aa).

It belongs to the band 7/mec-2 family. Flotillin subfamily. In terms of assembly, heterooligomeric complex of flotillins 1 and 2 and caveolins 1 and 2. As to expression, expressed in brain and ventral nerve cord from stage 12-16 of embryogenesis.

It is found in the cell membrane. Its subcellular location is the membrane. The protein resides in the caveola. Its function is as follows. May act as a scaffolding protein within caveolar membranes, functionally participating in formation of caveolae or caveolae-like vesicles. The polypeptide is Flotillin-1 (Drosophila melanogaster (Fruit fly)).